Consider the following 147-residue polypeptide: Anti-sigma F factor (147 aa).

It belongs to the anti-sigma-factor family.

It carries out the reaction L-seryl-[protein] + ATP = O-phospho-L-seryl-[protein] + ADP + H(+). The enzyme catalyses L-threonyl-[protein] + ATP = O-phospho-L-threonyl-[protein] + ADP + H(+). In terms of biological role, binds to sigma F and blocks its ability to form an RNA polymerase holoenzyme (E-sigma F). Phosphorylates SpoIIAA on a serine residue. This phosphorylation may enable SpoIIAA to act as an anti-anti-sigma factor that counteracts SpoIIAB and thus releases sigma F from inhibition. The protein is Anti-sigma F factor of Priestia megaterium (Bacillus megaterium).